The primary structure comprises 173 residues: Putative 4-hydroxy-4-methyl-2-oxoglutarate aldolase (173 aa).

Substrate-binding positions include glycine 89–leucine 92 and arginine 111. An a divalent metal cation-binding site is contributed by aspartate 112.

The protein belongs to the class II aldolase/RraA-like family. As to quaternary structure, homotrimer. It depends on a divalent metal cation as a cofactor.

It catalyses the reaction 4-hydroxy-4-methyl-2-oxoglutarate = 2 pyruvate. The enzyme catalyses oxaloacetate + H(+) = pyruvate + CO2. In terms of biological role, catalyzes the aldol cleavage of 4-hydroxy-4-methyl-2-oxoglutarate (HMG) into 2 molecules of pyruvate. Also contains a secondary oxaloacetate (OAA) decarboxylase activity due to the common pyruvate enolate transition state formed following C-C bond cleavage in the retro-aldol and decarboxylation reactions. The polypeptide is Putative 4-hydroxy-4-methyl-2-oxoglutarate aldolase (Albidiferax ferrireducens (strain ATCC BAA-621 / DSM 15236 / T118) (Rhodoferax ferrireducens)).